The following is a 596-amino-acid chain: A-type ATP synthase subunit A (596 aa).

241–248 (GPFGSGKT) is a binding site for ATP.

This sequence belongs to the ATPase alpha/beta chains family. In terms of assembly, has multiple subunits with at least A(3), B(3), C, D, E, F, H, I and proteolipid K(x).

It is found in the cell membrane. It carries out the reaction ATP + H2O + 4 H(+)(in) = ADP + phosphate + 5 H(+)(out). Its function is as follows. Component of the A-type ATP synthase that produces ATP from ADP in the presence of a proton gradient across the membrane. The A chain is the catalytic subunit. The sequence is that of A-type ATP synthase subunit A from Ignicoccus hospitalis (strain KIN4/I / DSM 18386 / JCM 14125).